Reading from the N-terminus, the 268-residue chain is Thiazole synthase (268 aa).

Lys-100 functions as the Schiff-base intermediate with DXP in the catalytic mechanism. 1-deoxy-D-xylulose 5-phosphate contacts are provided by residues Gly-161, 187 to 188 (AG), and 209 to 210 (NT). Residues 248-268 (ATPSSPSEGMITGSPHSAANN) are disordered.

It belongs to the ThiG family. As to quaternary structure, homotetramer. Forms heterodimers with either ThiH or ThiS.

Its subcellular location is the cytoplasm. The enzyme catalyses [ThiS sulfur-carrier protein]-C-terminal-Gly-aminoethanethioate + 2-iminoacetate + 1-deoxy-D-xylulose 5-phosphate = [ThiS sulfur-carrier protein]-C-terminal Gly-Gly + 2-[(2R,5Z)-2-carboxy-4-methylthiazol-5(2H)-ylidene]ethyl phosphate + 2 H2O + H(+). It functions in the pathway cofactor biosynthesis; thiamine diphosphate biosynthesis. Catalyzes the rearrangement of 1-deoxy-D-xylulose 5-phosphate (DXP) to produce the thiazole phosphate moiety of thiamine. Sulfur is provided by the thiocarboxylate moiety of the carrier protein ThiS. In vitro, sulfur can be provided by H(2)S. This is Thiazole synthase from Nitrosomonas eutropha (strain DSM 101675 / C91 / Nm57).